Reading from the N-terminus, the 305-residue chain is MYNGILPVFKERGLTSHDVVFKLRKILKMKKIGHTGTLDPEVNGVLPICLGDATKVSDYIMEMGKTYHAMITLGKSTTTEDQTGDILETRAVDKNDINEDTIDQVLQQFEGHIQQIPPMYSSVKVNGRKLYEYARNNETVERPKRQVFIKDIHRISEVTFQEQTCHFEVEVTCGKGTYIRTLATDIGLKLGFPAHMSRLTRIASGGFQLESSLTIDQIKELHEHDSLHNELFPIEYGLKGLKSFQVKDSNFKKKICNGQKFHKKVLSQNVKEPFIFVDSSTQKVLAIYIVHPDKPYEIKPKKVFN.

The Nucleophile role is filled by Asp39.

This sequence belongs to the pseudouridine synthase TruB family. Type 1 subfamily.

It catalyses the reaction uridine(55) in tRNA = pseudouridine(55) in tRNA. Responsible for synthesis of pseudouridine from uracil-55 in the psi GC loop of transfer RNAs. This Staphylococcus epidermidis (strain ATCC 35984 / DSM 28319 / BCRC 17069 / CCUG 31568 / BM 3577 / RP62A) protein is tRNA pseudouridine synthase B.